Consider the following 445-residue polypeptide: 6-phosphogluconate dehydrogenase, decarboxylating (445 aa).

NADP(+) is bound by residues 1–4 (AVMG), 22–24 (NRS), 63–65 (VKA), and Asn-91. Substrate is bound by residues Asn-91 and 117 to 119 (SGG). Lys-172 serves as the catalytic Proton acceptor. Residue 175 to 176 (HN) participates in substrate binding. The Proton donor role is filled by Glu-179. Substrate is bound by residues Tyr-180, Lys-249, Arg-276, Arg-434, and His-440.

The protein belongs to the 6-phosphogluconate dehydrogenase family. Homodimer.

It catalyses the reaction 6-phospho-D-gluconate + NADP(+) = D-ribulose 5-phosphate + CO2 + NADPH. The protein operates within carbohydrate degradation; pentose phosphate pathway; D-ribulose 5-phosphate from D-glucose 6-phosphate (oxidative stage): step 3/3. Its function is as follows. Catalyzes the oxidative decarboxylation of 6-phosphogluconate to ribulose 5-phosphate and CO(2), with concomitant reduction of NADP to NADPH. The protein is 6-phosphogluconate dehydrogenase, decarboxylating (gnd) of Citrobacter freundii.